The sequence spans 375 residues: MAVTEASLLRQCPLLLPQNRSKTVYEGFISAQGRDFHLRIVLPEDLQLKNARLLCSWQLRTILSGYHRIVQQRMQHSPDLMSFMMELKMLLEVALKNRQELYALPPPPQFYSSLIEEIGTLGWDKLVYADTCFSTIKLKAEDASGREHLITLKLKAKYPAESPDYFVDFPVPFCASWTPQSSLISIYSQFLAAIESLKAFWDVMDEIDEKTWVLEPEKPPRSATARRIALGNNVSINIEVDPRHPTMLPECFFLGADHVVKPLGIKLSRNIHLWDPENSVLQNLKDVLEIDFPARAILEKSDFTMDCGICYAYQLDGTIPDQVCDNSQCGQPFHQICLYEWLRGLLTSRQSFNIIFGECPYCSKPITLKMSGRKH.

At A2 the chain carries N-acetylalanine. The segment at 104–294 is UBC-RWD region (URD); it reads LPPPPQFYSS…KDVLEIDFPA (191 aa). Zn(2+)-binding residues include C307, C310, C324, C329, H334, C337, C359, and C362. The segment at 307 to 363 adopts an RING-type; degenerate zinc-finger fold; sequence CGICYAYQLDGTIPDQVCDNSQCGQPFHQICLYEWLRGLLTSRQSFNIIFGECPYCS.

In terms of assembly, interacts with GGN. Belongs to the multisubunit FA complex composed of FANCA, FANCB, FANCC, FANCE, FANCF, FANCG, FANCL/PHF9 and FANCM. The complex is not found in FA patients. In complex with FANCF, FANCA and FANCG, but not with FANCC, nor FANCE, interacts with HES1; this interaction may be essential for the stability and nuclear localization of FA core complex proteins. Interacts with FANCI. Directly interacts (via the RING-type zinc finger) with UBE2T and UBE2W. In terms of processing, the RING-type zinc finger domain is monoubiquitinated in the presence of UBE2T and UBE2W.

Its subcellular location is the cytoplasm. The protein resides in the nucleus. It catalyses the reaction S-ubiquitinyl-[E2 ubiquitin-conjugating enzyme]-L-cysteine + [acceptor protein]-L-lysine = [E2 ubiquitin-conjugating enzyme]-L-cysteine + N(6)-ubiquitinyl-[acceptor protein]-L-lysine.. It functions in the pathway protein modification; protein ubiquitination. Its function is as follows. Ubiquitin ligase protein that mediates monoubiquitination of FANCD2 in the presence of UBE2T, a key step in the DNA damage pathway. Also mediates monoubiquitination of FANCI. May stimulate the ubiquitin release from UBE2W. May be required for proper primordial germ cell proliferation in the embryonic stage, whereas it is probably not needed for spermatogonial proliferation after birth. In Homo sapiens (Human), this protein is E3 ubiquitin-protein ligase FANCL (FANCL).